We begin with the raw amino-acid sequence, 982 residues long: Serine/threonine-protein kinase PknD (982 aa).

A Protein kinase domain is found at 51–342 (YQIIKSIGKG…ELIRDIENYL (292 aa)). ATP is bound by residues 57-65 (IGKGGMGEV) and Lys-80. Asp-186 functions as the Proton acceptor in the catalytic mechanism.

Belongs to the protein kinase superfamily. Ser/Thr protein kinase family. Post-translationally, autophosphorylated on serine and threonine residues.

The enzyme catalyses L-seryl-[protein] + ATP = O-phospho-L-seryl-[protein] + ADP + H(+). It catalyses the reaction L-threonyl-[protein] + ATP = O-phospho-L-threonyl-[protein] + ADP + H(+). Together with the serine/threonine kinase Pkn1, may play a role in the specific interactions with host proteins during intracellular growth. This is Serine/threonine-protein kinase PknD from Protochlamydia amoebophila (strain UWE25).